We begin with the raw amino-acid sequence, 29 residues long: Cyclotide psyleio A (29 aa).

The cyclopeptide (Gly-Asp) cross-link spans 1-29; it reads GLPICGETCFTGTCNTPGCSCTYPICTRD. 3 cysteine pairs are disulfide-bonded: C5–C19, C9–C21, and C14–C26.

This is a cyclic peptide.

In terms of biological role, probably participates in a plant defense mechanism. The chain is Cyclotide psyleio A from Psychotria brachyceras.